The primary structure comprises 207 residues: Putative 3-methyladenine DNA glycosylase (207 aa).

Belongs to the DNA glycosylase MPG family.

This is Putative 3-methyladenine DNA glycosylase from Burkholderia lata (strain ATCC 17760 / DSM 23089 / LMG 22485 / NCIMB 9086 / R18194 / 383).